The primary structure comprises 241 residues: Glutathione S-transferase theta-3 (241 aa).

Positions 2–82 (GLELYLDLMS…YLSRKYKAPD (81 aa)) constitute a GST N-terminal domain. Residues 53 to 54 (KV) and 66 to 67 (ES) contribute to the glutathione site. Residues 88–222 (DLQTRARVDE…VVLKAKDMPP (135 aa)) enclose the GST C-terminal domain.

The protein belongs to the GST superfamily. Theta family. As to quaternary structure, homodimer. In terms of tissue distribution, expressed strongly in liver, and at lower levels in kidney and testis.

The protein localises to the cytoplasm. The catalysed reaction is RX + glutathione = an S-substituted glutathione + a halide anion + H(+). Its function is as follows. Conjugation of reduced glutathione to a wide number of exogenous and endogenous hydrophobic electrophiles. Shows high activity towards 4-nitrobenzyl chloride (4-NBC). Also has lower activity towards 1,2-epoxy-3-(p-nitrophenoxy)propane (EPNP), cumene hydroperoxide, 1-chloro-2,4-dinitrobenzene (CDNB), 7-chloro-4-nitrobenzo-2-oxa-1,3-diazole (NBD-Cl), and ethacrynic acid. The chain is Glutathione S-transferase theta-3 from Mus musculus (Mouse).